Reading from the N-terminus, the 643-residue chain is Phosphatidylinositol-3,5-bisphosphate 3-phosphatase MTMR2 (643 aa).

2 stretches are compositionally biased toward polar residues: residues 1 to 12 and 23 to 40; these read MEKSSSCESLGS and DSLSSASTSHSENSVHTK. The segment at 1-56 is disordered; it reads MEKSSSCESLGSQPAAARPPSVDSLSSASTSHSENSVHTKSASVVSSDSISTSADN. Residues S6 and S9 each carry the phosphoserine modification. Residues 41–55 show a composition bias toward low complexity; that stretch reads SASVVSSDSISTSAD. S58 bears the Phosphoserine mark. The GRAM domain maps to 68-139; it reads NKLAEMEEPP…GVINRVEKIG (72 aa). Positions 205–580 constitute a Myotubularin phosphatase domain; that stretch reads GWKLYDPLLE…RHLELWVGYY (376 aa). The a 1,2-diacyl-sn-glycero-3-phospho-(1D-myo-inositol-3,5-bisphosphate) site is built by N330, N355, and I356. Positions 330, 355, and 356 each coordinate a 1,2-diacyl-sn-glycero-3-phospho-(1D-myo-inositol-3-phosphate). Catalysis depends on C417, which acts as the Phosphocysteine intermediate. A 1,2-diacyl-sn-glycero-3-phospho-(1D-myo-inositol-3,5-bisphosphate) is bound by residues S418, D419, G420, W421, D422, R423, R459, and R463. A 1,2-diacyl-sn-glycero-3-phospho-(1D-myo-inositol-3-phosphate) is bound by residues S418, D419, G420, W421, D422, and R423. R463 contributes to the a 1,2-diacyl-sn-glycero-3-phospho-(1D-myo-inositol-3-phosphate) binding site. A coiled-coil region spans residues 593–627; the sequence is IHNRYKELLAKRAELQKKVEELQREISNRSTSSSE. Positions 615–643 are disordered; it reads QREISNRSTSSSERASSPAQCVTPVQTVV. Positions 620-631 are enriched in low complexity; it reads NRSTSSSERASS. Residues 632-643 are compositionally biased toward polar residues; the sequence is PAQCVTPVQTVV.

This sequence belongs to the protein-tyrosine phosphatase family. Non-receptor class myotubularin subfamily. Homodimer (via coiled-coil domain). Heterotetramer consisting of one MTMR2 dimer and one SBF2/MTMR13 dimer; specifically in peripheral nerves stabilizes SBF2/MTMR13 at the membranes and increases MTMR2 catalytic activity towards phosphatidylinositol 3,5-bisphosphate and to a lesser extent towards phosphatidylinositol 3-phosphate. Heterodimer with SBF1/MTMR5; acts as an adapter for the phosphatase MTMR2 to regulate MTMR2 catalytic activity and subcellular location. Heterodimer with MTMR12. In terms of processing, phosphorylation at Ser-58 decreases MTMR2 localization to endocytic vesicular structures.

The protein resides in the cytoplasm. The protein localises to the early endosome membrane. It localises to the perinuclear region. Its subcellular location is the cell projection. It is found in the axon. The protein resides in the endosome membrane. The enzyme catalyses a 1,2-diacyl-sn-glycero-3-phospho-(1D-myo-inositol-3,5-bisphosphate) + H2O = a 1,2-diacyl-sn-glycero-3-phospho-(1D-myo-inositol-5-phosphate) + phosphate. The catalysed reaction is a 1,2-diacyl-sn-glycero-3-phospho-(1D-myo-inositol-3-phosphate) + H2O = a 1,2-diacyl-sn-glycero-3-phospho-(1D-myo-inositol) + phosphate. It catalyses the reaction 1,2-dioctanoyl-sn-glycero-3-phospho-(1-D-myo-inositol-3-phosphate) + H2O = 1,2-dioctanoyl-sn-glycero-3-phospho-(1D-myo-inositol) + phosphate. It carries out the reaction 1,2-dioctanoyl-sn-glycero-3-phospho-(1D-myo-inositol-3,5-bisphosphate) + H2O = 1,2-dioctanoyl-sn-glycero-3-phospho-(1D-myo-inositol-5-phosphate) + phosphate. In terms of biological role, lipid phosphatase that specifically dephosphorylates the D-3 position of phosphatidylinositol 3-phosphate and phosphatidylinositol 3,5-bisphosphate, generating phosphatidylinositol and phosphatidylinositol 5-phosphate. Regulates the level of these phosphoinositides critical for various biological processes including autophagy initiation and autophagosome maturation. This Homo sapiens (Human) protein is Phosphatidylinositol-3,5-bisphosphate 3-phosphatase MTMR2.